The following is a 245-amino-acid chain: UPF0246 protein CE1889 (245 aa).

A disordered region spans residues 1 to 20 (MLILLPPSETKTPGGAGAPL).

The protein belongs to the UPF0246 family.

This Corynebacterium efficiens (strain DSM 44549 / YS-314 / AJ 12310 / JCM 11189 / NBRC 100395) protein is UPF0246 protein CE1889.